The primary structure comprises 450 residues: Protein W (450 aa).

The segment at 53–92 (SGESEQVEGGMSKDDGDVERRNLEDLSSTSPTDGTIGKRV) is disordered. Basic and acidic residues predominate over residues 63 to 76 (MSKDDGDVERRNLE). Ser-257 carries the phosphoserine; by host modification. Residues 265-324 (ISPEDEEPSSVGGKPNESIGRTIEGQSIRDNLQAKDNKSTDVPGAGPKDSAVKEEPPQKR) are disordered. Ser-350 bears the Phosphoserine; by host mark. Disordered stretches follow at residues 384-403 (VQTA…RGIP) and 429-450 (PGMF…RMSN). Over residues 438–450 (TKKARVSMRRMSN) the composition is skewed to basic residues. The Nuclear localization signal motif lies at 439–442 (KKAR).

Interacts with host STAT1.

Its subcellular location is the host nucleus. In terms of biological role, prevent the establishment of cellular antiviral state by blocking the interferon-alpha/beta (IFN-alpha/beta). Interacts with host STAT1 protein in the nucleus, blocking it's phosphorylation by IFN-alpha/beta. Also blocks antiviral state induced by Toll-like receptor 3/TLR3 binding to dsRNA. The polypeptide is Protein W (P/V/C) (Cynopterus brachyotis (Lesser short-nosed fruit bat)).